The chain runs to 485 residues: Putative phosphoethanolamine transferase HI_1064 (485 aa).

4 helical membrane-spanning segments follow: residues 33–53, 55–75, 81–101, and 125–145; these read ILPA…ILIG, GMFT…ILLL, SFYF…PTGL, and FLLQ…ILIF.

This sequence belongs to the phosphoethanolamine transferase family.

The protein localises to the cell membrane. The protein is Putative phosphoethanolamine transferase HI_1064 of Haemophilus influenzae (strain ATCC 51907 / DSM 11121 / KW20 / Rd).